Here is a 75-residue protein sequence, read N- to C-terminus: Cytochrome c oxidase subunit 6C (75 aa).

Residues 1-13 (MASEVLAKPQMRG) are Mitochondrial matrix-facing. The helical transmembrane segment at 14–54 (LLARRLRIHMVGAFLISLGVAALYKFGVAEPRKKAYADFYK) threads the bilayer. Over 55-75 (NYSPEKDFEEMKKAGVFRSIK) the chain is Mitochondrial intermembrane.

This sequence belongs to the cytochrome c oxidase subunit 6c family. In terms of assembly, component of the cytochrome c oxidase (complex IV, CIV), a multisubunit enzyme composed of 14 subunits. The complex is composed of a catalytic core of 3 subunits MT-CO1, MT-CO2 and MT-CO3, encoded in the mitochondrial DNA, and 11 supernumerary subunits COX4I, COX5A, COX5B, COX6A, COX6B, COX6C, COX7A, COX7B, COX7C, COX8 and NDUFA4, which are encoded in the nuclear genome. The complex exists as a monomer or a dimer and forms supercomplexes (SCs) in the inner mitochondrial membrane with NADH-ubiquinone oxidoreductase (complex I, CI) and ubiquinol-cytochrome c oxidoreductase (cytochrome b-c1 complex, complex III, CIII), resulting in different assemblies (supercomplex SCI(1)III(2)IV(1) and megacomplex MCI(2)III(2)IV(2)).

The protein localises to the mitochondrion inner membrane. Its pathway is energy metabolism; oxidative phosphorylation. Its function is as follows. Component of the cytochrome c oxidase, the last enzyme in the mitochondrial electron transport chain which drives oxidative phosphorylation. The respiratory chain contains 3 multisubunit complexes succinate dehydrogenase (complex II, CII), ubiquinol-cytochrome c oxidoreductase (cytochrome b-c1 complex, complex III, CIII) and cytochrome c oxidase (complex IV, CIV), that cooperate to transfer electrons derived from NADH and succinate to molecular oxygen, creating an electrochemical gradient over the inner membrane that drives transmembrane transport and the ATP synthase. Cytochrome c oxidase is the component of the respiratory chain that catalyzes the reduction of oxygen to water. Electrons originating from reduced cytochrome c in the intermembrane space (IMS) are transferred via the dinuclear copper A center (CU(A)) of subunit 2 and heme A of subunit 1 to the active site in subunit 1, a binuclear center (BNC) formed by heme A3 and copper B (CU(B)). The BNC reduces molecular oxygen to 2 water molecules using 4 electrons from cytochrome c in the IMS and 4 protons from the mitochondrial matrix. This Saimiri sciureus (Common squirrel monkey) protein is Cytochrome c oxidase subunit 6C (COX6C).